Consider the following 140-residue polypeptide: Cysteine protease inhibitor 6 (140 aa).

Residues cysteine 103 and cysteine 109 are joined by a disulfide bond.

This sequence belongs to the protease inhibitor I3 (leguminous Kunitz-type inhibitor) family.

It localises to the vacuole. Inhibitor of cysteine proteases. May protect the plant by inhibiting proteases of invading organisms. This Solanum tuberosum (Potato) protein is Cysteine protease inhibitor 6.